The primary structure comprises 191 residues: GDP-mannose pyrophosphatase (191 aa).

GDP-alpha-D-mannose-binding positions include Tyr17, 38–40 (KRE), Arg67, and 85–87 (AGL). One can recognise a Nudix hydrolase domain in the interval 43–180 (DRGNGATILL…EIRDGKTVLL (138 aa)). Mg(2+)-binding residues include Ala85, Glu100, and Glu104. The Nudix box motif lies at 86-106 (GLLDNDEPEVCIRKEAIEETG). GDP-alpha-D-mannose contacts are provided by residues Glu104, Glu127, 150–151 (DE), and Lys176. Residue Glu151 participates in Mg(2+) binding.

The protein belongs to the Nudix hydrolase family. NudK subfamily. In terms of assembly, homodimer. Requires Mg(2+) as cofactor.

It carries out the reaction GDP-alpha-D-mannose + H2O = alpha-D-mannose 1-phosphate + GMP + 2 H(+). Nucleoside diphosphate sugar hydrolase that hydrolyzes GDP-mannose as its preferred substrate, yielding GMP and mannose-1-phosphate. This is GDP-mannose pyrophosphatase (nudK) from Shigella boydii serotype 4 (strain Sb227).